The primary structure comprises 1218 residues: NACHT, LRR and PYD domains-containing protein 1a allele 5 (1218 aa).

Residues 1 to 29 are compositionally biased toward polar residues; that stretch reads MGESQSKQESNTRVAQHGSQQDVDPTFQT. 2 disordered regions span residues 1 to 44 and 71 to 91; these read MGES…QVEQ and EMDH…DRSE. Basic residues predominate over residues 77 to 87; the sequence is RRHSHQSKKKL. Positions 175 to 484 constitute an NACHT domain; that stretch reads QLVIIEGAAG…EFFAAMSYIL (310 aa). Residue 181–188 coordinates ATP; the sequence is GAAGIGKS. LRR repeat units lie at residues 343–364, 673–693, and 730–750; these read KERN…LTLC, NLEE…RSLC, and RLAE…RQLC. Positions 799 to 815 are enriched in polar residues; it reads TMPTENTDGEESLTSSK. Residues 799–842 form a disordered region; that stretch reads TMPTENTDGEESLTSSKQQQQQSGDKHMEPLGTDDDFWGPSGPV. Residues 835–968 form a ZU5 region; that stretch reads FWGPSGPVST…HFAVLENPSF (134 aa). The 284-residue stretch at 835–1118 folds into the FIIND domain; it reads FWGPSGPVST…LRPALPRMAS (284 aa). Positions 969-1118 are UPA; that stretch reads SPMGVLLRMI…LRPALPRMAS (150 aa). The CARD domain occupies 1122–1211; sequence DAPALLHFVD…HLIMDLLEKS (90 aa).

Belongs to the NLRP family. Interacts (via LRR repeats) with BCL2 and BCL2L1 (via the loop between motifs BH4 and BH3). Interacts with NOD2; this interaction is enhanced in the presence of muramyl dipeptide (MDP) and increases IL1B release. Interacts with EIF2AK2/PKR; this interaction requires EIF2AK2 activity, is accompanied by EIF2AK2 autophosphorylation and promotes inflammasome assembly in response to danger-associated signals. Interacts with MEFV; this interaction targets Nlrp1a to degradation by autophagy, hence preventing excessive IL1B- and IL18-mediated inflammation. Interacts with DPP9; leading to inhibit activation of the inflammasome. DPP9 acts via formation of a ternary complex, composed of a DPP9 homodimer, one full-length NLRP1 protein, and one cleaved C-terminus of Nlrp1a (NACHT, LRR and PYD domains-containing protein 1a, C-terminus). Interacts with DPP8; leading to inhibit activation of the inflammasome, probably via formation of a ternary complex with DPP8. As to quaternary structure, interacts with the C-terminal part of Nlrp1a (NACHT, LRR and PYD domains-containing protein 1a, C-terminus) in absence of pathogens and other damage-associated signals. In terms of assembly, interacts with the N-terminal part of Nlrp1a (NACHT, LRR and PYD domains-containing protein 1a, N-terminus) in absence of pathogens and other damage-associated signals. Homomultimer; forms the Nlrp1a inflammasome polymeric complex, a filament composed of homopolymers of this form in response to pathogens and other damage-associated signals. The Nlrp1a inflammasome polymeric complex directly recruits pro-caspase-1 (proCASP1) independently of PYCARD/ASC. Interacts (via CARD domain) with CASP1 (via CARD domain); leading to CASP1 activation. In terms of processing, autocatalytically cleaved. Autocatalytic cleavage in FIIND region occurs constitutively, prior to activation signals, and is required for inflammasome activity (IL1B release), possibly by facilitating CASP1 binding. Both N- and C-terminal parts remain associated non-covalently. Ubiquitinated in response to pathogen-associated signals, leading to its degradation by the proteasome and subsequent release of the cleaved C-terminal part of the protein (NACHT, LRR and PYD domains-containing protein 1a, C-terminus), which polymerizes and forms the Nlrp1a inflammasome.

It is found in the cytoplasm. The protein resides in the cytosol. Its subcellular location is the nucleus. It localises to the inflammasome. Its activity is regulated as follows. Activated by pathogens and other damage-associated signals: activation promotes ubiquitination and degradation of the N-terminal part, releasing the cleaved C-terminal part of the protein (NACHT, LRR and PYD domains-containing protein 1a, C-terminus), which polymerizes and forms the Nlrp1a inflammasome. Nlrp1a inflammasome is inhibited by DPP8 and DPP9, which sequester the C-terminal fragment of Nlrp1a (NACHT, LRR and PYD domains-containing protein 1a, C-terminus) in a ternary complex, thereby preventing Nlrp1a oligomerization and activation. Nlrp1a inflammasome is strongly activated by Val-boroPro (Talabostat, PT-100), an inhibitor of dipeptidyl peptidases DPP8 and DPP9. Val-boroPro relieves inhibition of DPP8 and/or DPP9 by promoting disruption of the ternary complex, releasing its C-terminal part from autoinhibition. Not activated by cleavage by B.anthracis lethal toxin (LT) endopeptidase. Highly activated by Toxoplasma gondii. Acts as the sensor component of the Nlrp1a inflammasome, which mediates inflammasome activation in response to various pathogen-associated signals, leading to subsequent pyroptosis. Inflammasomes are supramolecular complexes that assemble in the cytosol in response to pathogens and other damage-associated signals and play critical roles in innate immunity and inflammation. Acts as a recognition receptor (PRR): recognizes specific pathogens and other damage-associated signals, such as Val-boroPro inhibitor, and mediates the formation of the inflammasome polymeric complex. In response to pathogen-associated signals, the N-terminal part of Nlrp1a is degraded by the proteasome, releasing the cleaved C-terminal part of the protein (NACHT, LRR and PYD domains-containing protein 1a, C-terminus), which polymerizes to initiate the formation of the inflammasome complex: the inflammasome directly recruits pro-caspase-1 (proCASP1) independently of PYCARD/ASC and promotes caspase-1 (CASP1) activation, which subsequently cleaves and activates inflammatory cytokines IL1B and IL18 and gasdermin-D (GSDMD), leading to pyroptosis. In the absence of GSDMD expression, the Nlrp1a inflammasome is able to recruit and activate CASP8, leading to activation of gasdermin-E (GSDME). In terms of biological role, constitutes the precursor of the Nlrp1a inflammasome, which mediates autoproteolytic processing within the FIIND domain to generate the N-terminal and C-terminal parts, which are associated non-covalently in absence of pathogens and other damage-associated signals. Functionally, regulatory part that prevents formation of the Nlrp1a inflammasome: in absence of pathogens and other damage-associated signals, interacts with the C-terminal part of Nlrp1a (NACHT, LRR and PYD domains-containing protein 1a, C-terminus), preventing activation of the Nlrp1a inflammasome. In response to pathogen-associated signals, this part is ubiquitinated by the N-end rule pathway and degraded by the proteasome, releasing the cleaved C-terminal part of the protein, which polymerizes and forms the Nlrp1a inflammasome. Its function is as follows. Constitutes the active part of the Nlrp1a inflammasome. In absence of pathogens and other damage-associated signals, interacts with the N-terminal part of Nlrp1a (NACHT, LRR and PYD domains-containing protein 1a, N-terminus), preventing activation of the Nlrp1a inflammasome. In response to pathogen-associated signals, the N-terminal part of Nlrp1a is degraded by the proteasome, releasing this form, which polymerizes to form the Nlrp1a inflammasome complex: the Nlrp1a inflammasome complex then directly recruits pro-caspase-1 (proCASP1) and promotes caspase-1 (CASP1) activation, leading to gasdermin-D (GSDMD) cleavage and subsequent pyroptosis. The protein is NACHT, LRR and PYD domains-containing protein 1a allele 5 of Rattus norvegicus (Rat).